The primary structure comprises 495 residues: Myocyte-specific enhancer factor 2A (495 aa).

In terms of domain architecture, MADS-box spans 3–57 (RKKIQITRIMDERNRQVTFTKRKFGLMKKAYELSVLCDCEIALIIFNSSNKLFQY). A DNA-binding region (mef2-type) is located at residues 58–86 (ASTDMDKVLLKYTEYNEPHESRTNSDIVE). Ser-59 is modified (phosphoserine; by CK2). Ser-98 is modified (phosphoserine). The interval 175 to 225 (AESSMLSPPPATLHRNVSPGAPQRPPSTGSAGGMLSTTDLTVPNGAGNGPV) is disordered. Ser-235 carries the phosphoserine modification. The interval 242–271 (TGANSVGKVMPTKSPPPPGGGSVGMNSRKP) is disordered. Lys-249 bears the N6-acetyllysine mark. Ser-255 is subject to Phosphoserine. The interval 266–283 (MNSRKPDLRVVIPPSSKG) is required for interaction with MAPKs. Thr-304 and Thr-311 each carry phosphothreonine; by MAPK7 and MAPK14. Ser-347 carries the post-translational modification Phosphoserine; by MAPK7. Over residues 382–394 (SNLSINTNQNINI) the composition is skewed to polar residues. The tract at residues 382–495 (SNLSINTNQN…KRMRMDTWVT (114 aa)) is disordered. Lys-395 bears the N6-acetyllysine; alternate mark. A Glycyl lysine isopeptide (Lys-Gly) (interchain with G-Cter in SUMO); alternate cross-link involves residue Lys-395. The residue at position 400 (Ser-400) is a Phosphoserine; by CDK5. Thr-407 carries the post-translational modification Phosphothreonine. The segment covering 421–433 (QQPPPQPPQPQPQ) has biased composition (pro residues). The residue at position 441 (Ser-441) is a Phosphoserine. Low complexity predominate over residues 441 to 454 (SPVDSLSSSSSSYD). 2 stretches are compositionally biased toward basic and acidic residues: residues 455-465 (GSDREDPRGDF) and 476-495 (NAED…TWVT).

Binds DNA as a homo- or heterodimer. Dimerizes with MEF2D. Interacts with HDAC7. Interacts with PIAS1; the interaction enhances sumoylation. Interacts with HDAC4, HDAC9 and SLC2A4RG. Interacts (via the N-terminal) with MAPK7; the interaction results in the phosphorylation and transcriptional activity of MEF2A. Constitutive phosphorylation on Ser-400 promotes Lys-395 sumoylation thus preventing acetylation at this site. Dephosphorylation on Ser-400 by PPP3CA upon neuron depolarization promotes a switch from sumoylation to acetylation on residue Lys-395 leading to inhibition of dendrite claw differentiation. Phosphorylation on Thr-304 and Thr-311 are the main sites involved in p38 MAPK signaling and activate transcription. Phosphorylated on these sites by MAPK14/p38alpha and MAPK11/p38beta, but not by MAPK13/p38delta nor by MAPK12/p38gamma. Phosphorylation on Ser-400 by CDK5 induced by neurotoxicity inhibits MEF2A transcriptional activation leading to apoptosis of cortical neurons. Phosphorylation on Thr-304, Thr-311 and Ser-347 can be induced by EGF. Post-translationally, sumoylation on Lys-395 is enhanced by PIAS1 and represses transcriptional activity. Phosphorylation on Ser-400 is required for sumoylation. Has no effect on nuclear location nor on DNA binding. Sumoylated with SUMO1 and, to a lesser extent with SUMO2 and SUMO3. PIASx facilitates sumoylation in postsynaptic dendrites in the cerebellar cortex and promotes their morphogenesis. In terms of processing, acetylation on Lys-395 activates transcriptional activity. Acetylated by p300 on several sites in diffentiating myocytes. Acetylation on Lys-4 increases DNA binding and transactivation. Hyperacetylation by p300 leads to enhanced cardiac myocyte growth and heart failure. Proteolytically cleaved in cerebellar granule neurons on several sites by caspase 3 and caspase 7 following neurotoxicity. Preferentially cleaves the CDK5-mediated hyperphosphorylated form which leads to neuron apoptosis and transcriptional inactivation.

The protein localises to the nucleus. Its function is as follows. Transcriptional activator which binds specifically to the MEF2 element, 5'-YTA[AT](4)TAR-3', found in numerous muscle-specific genes. Also involved in the activation of numerous growth factor- and stress-induced genes. Mediates cellular functions not only in skeletal and cardiac muscle development, but also in neuronal differentiation and survival. Plays diverse roles in the control of cell growth, survival and apoptosis via p38 MAPK signaling in muscle-specific and/or growth factor-related transcription. In cerebellar granule neurons, phosphorylated and sumoylated MEF2A represses transcription of NUR77 promoting synaptic differentiation. Associates with chromatin to the ZNF16 promoter. This is Myocyte-specific enhancer factor 2A (Mef2a) from Rattus norvegicus (Rat).